Here is a 121-residue protein sequence, read N- to C-terminus: Small ribosomal subunit protein uS13 (121 aa).

The segment at 94–121 is disordered; it reads GLPVRGQNTKNNARTRKGPRRTVANKKK. Basic residues predominate over residues 106-121; sequence ARTRKGPRRTVANKKK.

Belongs to the universal ribosomal protein uS13 family. As to quaternary structure, part of the 30S ribosomal subunit. Forms a loose heterodimer with protein S19. Forms two bridges to the 50S subunit in the 70S ribosome.

Located at the top of the head of the 30S subunit, it contacts several helices of the 16S rRNA. In the 70S ribosome it contacts the 23S rRNA (bridge B1a) and protein L5 of the 50S subunit (bridge B1b), connecting the 2 subunits; these bridges are implicated in subunit movement. Contacts the tRNAs in the A and P-sites. The chain is Small ribosomal subunit protein uS13 from Geobacillus sp. (strain WCH70).